Here is an 885-residue protein sequence, read N- to C-terminus: Sensor histidine kinase KdpD (885 aa).

Transmembrane regions (helical) follow at residues 384–404 (AIDM…GLWI), 415–435 (IILM…RSFI), 436–456 (IGFL…TEPR), and 464–484 (FDYP…SALL). The region spanning 660-880 (SISHDIRTPL…IFYFNIYTDF (221 aa)) is the Histidine kinase domain. Histidine 663 is modified (phosphohistidine; by autocatalysis).

Its subcellular location is the membrane. The enzyme catalyses ATP + protein L-histidine = ADP + protein N-phospho-L-histidine.. Cyclic di-AMP is a negative regulator of the Kdp system. Its function is as follows. Member of the two-component regulatory system KdpD/KdpE that regulates the transcription of a series of virulence factors through sensing external K(+) concentrations. Also regulates capsular polysaccharide production. May function as a membrane-associated protein kinase that phosphorylates KdpE in response to environmental signals. In turn, KpdE functions as a transcriptional regulator by direct binding to promoter regions of target genes including spa, hla, aur and geh. The polypeptide is Sensor histidine kinase KdpD (Staphylococcus aureus (strain NCTC 8325 / PS 47)).